A 363-amino-acid chain; its full sequence is S-methylmethionine--homocysteine S-methyltransferase BHMT2 (363 aa).

In terms of domain architecture, Hcy-binding spans 11-305; the sequence is RGILERLESG…YHIRAIAEEL (295 aa). Zn(2+) contacts are provided by C208, C290, and C291. Residue S321 is modified to Phosphoserine.

In terms of assembly, homotetramer. Requires Zn(2+) as cofactor.

The catalysed reaction is S-methyl-L-methionine + L-homocysteine = 2 L-methionine + H(+). It functions in the pathway amino-acid biosynthesis; L-methionine biosynthesis via de novo pathway; L-methionine from L-homocysteine (BhmT route): step 1/1. In terms of biological role, involved in the regulation of homocysteine metabolism. Converts betaine and homocysteine to dimethylglycine and methionine, respectively. This reaction is also required for the irreversible oxidation of choline. The chain is S-methylmethionine--homocysteine S-methyltransferase BHMT2 (BHMT2) from Pongo abelii (Sumatran orangutan).